Reading from the N-terminus, the 231-residue chain is Transcriptional regulatory protein KdpE (231 aa).

The region spanning 4 to 117 is the Response regulatory domain; that stretch reads KILIIEDDHA…ELRARIRVIE (114 aa). Aspartate 53 bears the 4-aspartylphosphate mark. The ompR/PhoB-type DNA-binding region spans 127–227; that stretch reads NIVFTNGLLS…HPRIGYQMLQ (101 aa).

Phosphorylated by KdpD. Phosphorylation is required for transcriptional activity.

In terms of biological role, member of the two-component regulatory system KdpD/KdpE that regulates the transcription of a series of virulence factors through sensing external K(+) concentrations. Also regulates capsular polysaccharide synthesis. Upon phosphorylation by KpdD, functions as a transcriptional regulator by direct binding to promoter regions of target genes including spa, hla, aur and geh. Represses the transcription of kdpFABC operon. In Staphylococcus aureus (strain NCTC 8325 / PS 47), this protein is Transcriptional regulatory protein KdpE.